Here is a 305-residue protein sequence, read N- to C-terminus: Coenzyme PQQ synthesis protein B (305 aa).

Belongs to the PqqB family.

It functions in the pathway cofactor biosynthesis; pyrroloquinoline quinone biosynthesis. May be involved in the transport of PQQ or its precursor to the periplasm. This is Coenzyme PQQ synthesis protein B from Cupriavidus taiwanensis (strain DSM 17343 / BCRC 17206 / CCUG 44338 / CIP 107171 / LMG 19424 / R1) (Ralstonia taiwanensis (strain LMG 19424)).